Here is a 485-residue protein sequence, read N- to C-terminus: Mitochondrial metalloendopeptidase OMA1 (485 aa).

The N-terminal 16 residues, 1–16 (MKPSLKRRLLLLSRKF), are a transit peptide targeting the mitochondrion. Residues 17–147 (AKASIRKLLR…GPGRWFQNPR (131 aa)) are Mitochondrial matrix-facing. Residues 148–168 (TVFTVVLVGSVGLITLIVGNT) form a helical membrane-spanning segment. Residues 169 to 485 (ETIPYTKRTH…AGRTGVEGFL (317 aa)) lie on the Mitochondrial intermembrane side of the membrane. His-352 provides a ligand contact to Zn(2+). Glu-353 is a catalytic residue. 2 residues coordinate Zn(2+): His-356 and Glu-405. A required for protease activation region spans residues 456-485 (KLLAQANVMEEALMIYREVQAGRTGVEGFL).

It belongs to the peptidase M48A family. As to quaternary structure, homooligomer. The cofactor is Zn(2+).

Its subcellular location is the mitochondrion inner membrane. In terms of biological role, protease that is part of the quality control system in the inner membrane of mitochondria. Metalloendopeptidase that modulates the oxidative phosphorylation (OXPHOS) system and plant growth. Involved in tolerance mechanisms to heat, osmotic and oxidative stresses. This Arabidopsis thaliana (Mouse-ear cress) protein is Mitochondrial metalloendopeptidase OMA1.